Consider the following 284-residue polypeptide: RNase adapter protein RapZ (284 aa).

Position 8 to 15 (8 to 15 (GRSGSGKS)) interacts with ATP. 56-59 (DVRN) is a binding site for GTP. Residues 266 to 284 (RSRGKNVQSRHRTLEKRRS) are RNA-binding.

It belongs to the RapZ-like family. RapZ subfamily. In terms of assembly, homotrimer.

In terms of biological role, modulates the synthesis of GlmS, by affecting the processing and stability of the regulatory small RNA GlmZ. When glucosamine-6-phosphate (GlcN6P) concentrations are high in the cell, RapZ binds GlmZ and targets it to cleavage by RNase E. Consequently, GlmZ is inactivated and unable to activate GlmS synthesis. Under low GlcN6P concentrations, RapZ is sequestered and inactivated by an other regulatory small RNA, GlmY, preventing GlmZ degradation and leading to synthesis of GlmS. The protein is RNase adapter protein RapZ of Erwinia tasmaniensis (strain DSM 17950 / CFBP 7177 / CIP 109463 / NCPPB 4357 / Et1/99).